A 509-amino-acid chain; its full sequence is Cobyric acid synthase (509 aa).

The GATase cobBQ-type domain maps to 262-459; it reads EIKVGIIKLP…IHGIFENDSW (198 aa). The active-site Nucleophile is the cysteine 343. Residue histidine 451 is part of the active site.

Belongs to the CobB/CobQ family. CobQ subfamily.

It participates in cofactor biosynthesis; adenosylcobalamin biosynthesis. Functionally, catalyzes amidations at positions B, D, E, and G on adenosylcobyrinic A,C-diamide. NH(2) groups are provided by glutamine, and one molecule of ATP is hydrogenolyzed for each amidation. This is Cobyric acid synthase from Prochlorococcus marinus (strain MIT 9301).